A 219-amino-acid chain; its full sequence is Thymidylate kinase (219 aa).

9 to 16 serves as a coordination point for ATP; that stretch reads GIEGCGKT.

This sequence belongs to the thymidylate kinase family.

The catalysed reaction is dTMP + ATP = dTDP + ADP. Functionally, phosphorylation of dTMP to form dTDP in both de novo and salvage pathways of dTTP synthesis. In Syntrophus aciditrophicus (strain SB), this protein is Thymidylate kinase.